Here is a 462-residue protein sequence, read N- to C-terminus: Anthranilate synthase component 1 (462 aa).

L-tryptophan contacts are provided by residues serine 46 and 243–245; that span reads PHM. 278–279 is a chorismate binding site; that stretch reads GT. A Mg(2+)-binding site is contributed by glutamate 305. Chorismate contacts are provided by residues tyrosine 394, arginine 414, 428 to 430, and glycine 430; that span reads SGG. Glutamate 444 contacts Mg(2+).

Belongs to the anthranilate synthase component I family. Heterotetramer consisting of two non-identical subunits: a beta subunit (TrpG) and a large alpha subunit (TrpE). It depends on Mg(2+) as a cofactor.

It carries out the reaction chorismate + L-glutamine = anthranilate + pyruvate + L-glutamate + H(+). It functions in the pathway amino-acid biosynthesis; L-tryptophan biosynthesis; L-tryptophan from chorismate: step 1/5. Its activity is regulated as follows. Feedback inhibited by tryptophan. In terms of biological role, part of a heterotetrameric complex that catalyzes the two-step biosynthesis of anthranilate, an intermediate in the biosynthesis of L-tryptophan. In the first step, the glutamine-binding beta subunit (TrpG) of anthranilate synthase (AS) provides the glutamine amidotransferase activity which generates ammonia as a substrate that, along with chorismate, is used in the second step, catalyzed by the large alpha subunit of AS (TrpE) to produce anthranilate. In the absence of TrpG, TrpE can synthesize anthranilate directly from chorismate and high concentrations of ammonia. The protein is Anthranilate synthase component 1 (trpE) of Leptospira biflexa.